The sequence spans 87 residues: Translation initiation factor IF-1 (87 aa).

The S1-like domain maps to 16–87 (LSKEDVIEME…TKGRISYRHK (72 aa)).

It belongs to the IF-1 family. In terms of assembly, component of the 30S ribosomal translation pre-initiation complex which assembles on the 30S ribosome in the order IF-2 and IF-3, IF-1 and N-formylmethionyl-tRNA(fMet); mRNA recruitment can occur at any time during PIC assembly.

It is found in the cytoplasm. One of the essential components for the initiation of protein synthesis. Stabilizes the binding of IF-2 and IF-3 on the 30S subunit to which N-formylmethionyl-tRNA(fMet) subsequently binds. Helps modulate mRNA selection, yielding the 30S pre-initiation complex (PIC). Upon addition of the 50S ribosomal subunit IF-1, IF-2 and IF-3 are released leaving the mature 70S translation initiation complex. This is Translation initiation factor IF-1 from Magnetococcus marinus (strain ATCC BAA-1437 / JCM 17883 / MC-1).